The primary structure comprises 222 residues: Thiamine-phosphate synthase (222 aa).

4-amino-2-methyl-5-(diphosphooxymethyl)pyrimidine contacts are provided by residues Gln42–Lys46 and Asn74. The Mg(2+) site is built by Asp75 and Asp94. Residue Thr113 participates in 4-amino-2-methyl-5-(diphosphooxymethyl)pyrimidine binding. Ser140–Thr142 contributes to the 2-[(2R,5Z)-2-carboxy-4-methylthiazol-5(2H)-ylidene]ethyl phosphate binding site. A 4-amino-2-methyl-5-(diphosphooxymethyl)pyrimidine-binding site is contributed by Lys143. 2-[(2R,5Z)-2-carboxy-4-methylthiazol-5(2H)-ylidene]ethyl phosphate is bound at residue Gly169.

This sequence belongs to the thiamine-phosphate synthase family. Mg(2+) serves as cofactor.

It carries out the reaction 2-[(2R,5Z)-2-carboxy-4-methylthiazol-5(2H)-ylidene]ethyl phosphate + 4-amino-2-methyl-5-(diphosphooxymethyl)pyrimidine + 2 H(+) = thiamine phosphate + CO2 + diphosphate. The catalysed reaction is 2-(2-carboxy-4-methylthiazol-5-yl)ethyl phosphate + 4-amino-2-methyl-5-(diphosphooxymethyl)pyrimidine + 2 H(+) = thiamine phosphate + CO2 + diphosphate. It catalyses the reaction 4-methyl-5-(2-phosphooxyethyl)-thiazole + 4-amino-2-methyl-5-(diphosphooxymethyl)pyrimidine + H(+) = thiamine phosphate + diphosphate. The protein operates within cofactor biosynthesis; thiamine diphosphate biosynthesis; thiamine phosphate from 4-amino-2-methyl-5-diphosphomethylpyrimidine and 4-methyl-5-(2-phosphoethyl)-thiazole: step 1/1. Condenses 4-methyl-5-(beta-hydroxyethyl)thiazole monophosphate (THZ-P) and 2-methyl-4-amino-5-hydroxymethyl pyrimidine pyrophosphate (HMP-PP) to form thiamine monophosphate (TMP). This is Thiamine-phosphate synthase from Marinobacter nauticus (strain ATCC 700491 / DSM 11845 / VT8) (Marinobacter aquaeolei).